Reading from the N-terminus, the 718-residue chain is Mitotic spindle assembly checkpoint protein MAD1 (718 aa).

Met-1 carries the post-translational modification N-acetylmethionine. A Phosphoserine modification is found at Ser-16. Residues 46–632 (QQSMQLEERA…QTKIQEFRKA (587 aa)) adopt a coiled-coil conformation. The residue at position 61 (Lys-61) is an N6-acetyllysine; alternate. Lys-61 participates in a covalent cross-link: Glycyl lysine isopeptide (Lys-Gly) (interchain with G-Cter in SUMO2); alternate. Residues 79–82 (KRAR) carry the Nuclear localization signal motif. Ser-214 is subject to Phosphoserine. The important for interaction with IK stretch occupies residues 301 to 340 (VGLELENERLLAKLQSWERLDQTMGLSIRTPEDLSRFVVE). The tract at residues 380 to 532 (LLEERKKRET…EAQLERRALQ (153 aa)) is necessary for interaction with NEK2. At Ser-428 the chain carries Phosphoserine. The segment at 439 to 480 (EDMVQKVHSHSAEMEAQLSQALEELGGQKQRADMLEMELKML) is important for interaction with IK. Residues 540 to 551 (TKVLHMSLNPTS) form a necessary for interaction with MAD2L1 region. Phosphoserine is present on residues Ser-598 and Ser-610. The residue at position 634 (Tyr-634) is a Phosphotyrosine. Thr-716 bears the Phosphothreonine mark.

It belongs to the MAD1 family. As to quaternary structure, homodimer. Dimerizes via its N- and C- terminal regions. Heterodimerizes with MAD2L1 in order to form a tetrameric MAD1L1-MAD2L1 core complex. Interacts with the closed conformation form of MAD2L1 (C-MAD2) and open conformation form of MAD2L1 (O-MAD2). It is unclear whether MAD1L1 dimerization promotes the conversion of closed to open conformation of MAD2L1. Formation of a heterotetrameric core complex containing two molecules each of MAD1L1 and of MAD2L1 promotes binding of another molecule of MAD2L1 to each MAD2L1, resulting in a heterohexamer. Perturbation of the original MAD1L1-MAD2L1 structure by the spindle checkpoint may decrease MAD2L1 affinity for MAD1L1. CDC20 can compete with MAD1L1 for MAD2L1 binding, until the attachment and/or tension dampen the checkpoint signal, preventing further release of MAD2L1 on to CDC20. Also able to interact with the BUB1/BUB3 complex. Interacts with NEK2. Interacts with TTK. Interacts with TPR; the interactions occurs in a microtubule-independent manner. Interacts with IK. Interacts with the viral Tax protein. Interacts with PRAP1. In terms of assembly, interacts with MAD2L1; this interaction leads to the cytoplasmic sequestration of MAD2L1. Interacts with PRAP1. Post-translationally, phosphorylated; by BUB1. Become hyperphosphorylated in late S through M phases or after mitotic spindle damage. Phosphorylated; by TTK. In terms of tissue distribution, expressed in hepatocellular carcinomas and hepatoma cell lines (at protein level).

It is found in the nucleus. The protein localises to the chromosome. Its subcellular location is the centromere. It localises to the kinetochore. The protein resides in the nucleus envelope. It is found in the cytoplasm. The protein localises to the cytoskeleton. Its subcellular location is the microtubule organizing center. It localises to the centrosome. The protein resides in the spindle. It is found in the spindle pole. In terms of biological role, component of the spindle-assembly checkpoint that prevents the onset of anaphase until all chromosomes are properly aligned at the metaphase plate. Forms a heterotetrameric complex with the closed conformation form of MAD2L1 (C-MAD2) at unattached kinetochores during prometaphase, recruits an open conformation of MAD2L1 (O-MAD2) and promotes the conversion of O-MAD2 to C-MAD2, which ensures mitotic checkpoint signaling. Functionally, sequesters MAD2L1 in the cytoplasm preventing its function as an activator of the mitotic spindle assembly checkpoint (SAC) resulting in SAC impairment and chromosomal instability in hepatocellular carcinomas. This chain is Mitotic spindle assembly checkpoint protein MAD1 (MAD1L1), found in Homo sapiens (Human).